The following is a 333-amino-acid chain: PDZ domain-containing protein GIPC1 (333 aa).

Basic residues predominate over residues 1-11 (MPLGLGRRKKA). The disordered stretch occupies residues 1 to 55 (MPLGLGRRKKAPPLVENEEAEPSRSGLGVGEPGPLGGSGAGESQMGLPPPPASLR). Gly residues predominate over residues 27-40 (LGVGEPGPLGGSGA). Ser68 bears the Phosphoserine mark. In terms of domain architecture, PDZ spans 133–213 (EVEVFKSEDA…GRTFTLKLTE (81 aa)). Residues 221–244 (ISQRSSGGHPGSGPQLGTGRGTLR) form a disordered region. Phosphoserine is present on residues Ser222, Ser225, and Ser232. Over residues 228–240 (GHPGSGPQLGTGR) the composition is skewed to gly residues. Position 242 is a phosphothreonine (Thr242). Ser247 is subject to Phosphoserine.

This sequence belongs to the GIPC family. As to quaternary structure, interacts with SDC4/syndecan-4 and SEMA4C/semaphorin-4C. Interacts with RGS19 (C-terminus), GLUT1 (C-terminus), ACTN1, KIF1B, MYO6 and PLEKHG5. Widely expressed.

It localises to the cytoplasm. It is found in the membrane. Functionally, may be involved in G protein-linked signaling. This chain is PDZ domain-containing protein GIPC1 (Gipc1), found in Rattus norvegicus (Rat).